A 199-amino-acid chain; its full sequence is MTLVPMVVEQTSRGERAYDIYSRLLKERIIFITGPIEDQMASLIVAQLIFLESENPEKEICMYINSPGGVVTAGLSIYDTMQYIKPKVSTLCLGQAASMGSLLLAAGEPGMRYALPNSRIMIHQPSGGFQGQATDIEIHAKEILDIKGRLNDIYVKHTGRDLSEVVANMERDNFMRAEKAKDFGIIDKVIEKRLDIGVE.

S98 (nucleophile) is an active-site residue. H123 is a catalytic residue.

The protein belongs to the peptidase S14 family. Fourteen ClpP subunits assemble into 2 heptameric rings which stack back to back to give a disk-like structure with a central cavity, resembling the structure of eukaryotic proteasomes.

It localises to the cytoplasm. It catalyses the reaction Hydrolysis of proteins to small peptides in the presence of ATP and magnesium. alpha-casein is the usual test substrate. In the absence of ATP, only oligopeptides shorter than five residues are hydrolyzed (such as succinyl-Leu-Tyr-|-NHMec, and Leu-Tyr-Leu-|-Tyr-Trp, in which cleavage of the -Tyr-|-Leu- and -Tyr-|-Trp bonds also occurs).. In terms of biological role, cleaves peptides in various proteins in a process that requires ATP hydrolysis. Has a chymotrypsin-like activity. Plays a major role in the degradation of misfolded proteins. The chain is ATP-dependent Clp protease proteolytic subunit from Ehrlichia chaffeensis (strain ATCC CRL-10679 / Arkansas).